We begin with the raw amino-acid sequence, 638 residues long: Glucans biosynthesis glucosyltransferase H (638 aa).

A run of 6 helical transmembrane segments spans residues 60–82 (FYLI…AVMW), 97–119 (FMFL…FCVV), 415–437 (IGHY…IPLV), 464–486 (LWIF…FALL), 499–521 (LRVL…VVMY), and 578–600 (LAMW…ALTS).

The protein belongs to the glycosyltransferase 2 family. OpgH subfamily.

Its subcellular location is the cell inner membrane. It functions in the pathway glycan metabolism; osmoregulated periplasmic glucan (OPG) biosynthesis. Involved in the biosynthesis of osmoregulated periplasmic glucans (OPGs). This Xylella fastidiosa (strain 9a5c) protein is Glucans biosynthesis glucosyltransferase H.